Consider the following 303-residue polypeptide: MSEQAVEVSPKCLGPQHHINPLRFVMPPGSWDTHFHVFGPTTKYPYSETRKYTPPDSPFEEYVKLMLALGIERGVCVHPNIHGPDNSVTLDAVERSEGRFLAIVKIAPDVTLPQLKEMKKKGACGVRFAFNPEHGSGELDTALFDRVVQWCGELDWCVNLHFASNAIHSLAERLSQLTIPTLIDHFGRVHPTKGVDQPDFKTLVDLMRLPHMWVKLTGADRISRNSPSYQDVVPLARTLVDVAPDRVIWGTDWPHSGYFDVKRMPNDGDLTNLLLDFAPSEEQRRRILVDNPSRLFGQVAKGA.

The protein belongs to the metallo-dependent hydrolases superfamily. Sulfomuconolactone hydrolase family. In terms of assembly, monomer. Zn(2+) serves as cofactor.

The enzyme catalyses 4-sulfomuconolactone + H2O = maleylacetate + sulfite + 2 H(+). With respect to regulation, completely inhibited by ZnCl(2) and CuCl(2). Functionally, involved in the degradation of 4-sulfocatechol which is a central intermediate in the degradation of substituted sulfonated benzenes. Catalyzes the hydrolytical desulfonation of 4-sulfomuconolactone to yield maleylacetate. In Hydrogenophaga intermedia, this protein is 4-sulfomuconolactone hydrolase.